The chain runs to 168 residues: Ubiquitin-conjugating enzyme E2 2 (168 aa).

In terms of domain architecture, UBC core spans 4 to 150 (PAKRRLMRDF…VRETVENSWN (147 aa)). Cysteine 88 functions as the Glycyl thioester intermediate in the catalytic mechanism. The segment at 143-168 (ETVENSWNEDDEDEDEDEDEDIDDAE) is disordered. Positions 149–168 (WNEDDEDEDEDEDEDIDDAE) are enriched in acidic residues.

Belongs to the ubiquitin-conjugating enzyme family.

It localises to the cytoplasm. The protein localises to the nucleus. The enzyme catalyses S-ubiquitinyl-[E1 ubiquitin-activating enzyme]-L-cysteine + [E2 ubiquitin-conjugating enzyme]-L-cysteine = [E1 ubiquitin-activating enzyme]-L-cysteine + S-ubiquitinyl-[E2 ubiquitin-conjugating enzyme]-L-cysteine.. Its pathway is protein modification; protein ubiquitination. Its function is as follows. Catalyzes the covalent attachment of ubiquitin to other proteins. Plays a role in transcription regulation by catalyzing the monoubiquitination of histone H2B to form H2BK123ub1. H2BK123ub1 gives a specific tag for epigenetic transcriptional activation and is also a prerequisite for H3K4me and H3K79me formation. Also involved in postreplication repair of UV-damaged DNA, in N-end rule-dependent protein degradation and in sporulation. In Debaryomyces hansenii (strain ATCC 36239 / CBS 767 / BCRC 21394 / JCM 1990 / NBRC 0083 / IGC 2968) (Yeast), this protein is Ubiquitin-conjugating enzyme E2 2 (UBC2).